The following is a 415-amino-acid chain: Gamma-glutamyl phosphate reductase (415 aa).

It belongs to the gamma-glutamyl phosphate reductase family.

The protein localises to the cytoplasm. It carries out the reaction L-glutamate 5-semialdehyde + phosphate + NADP(+) = L-glutamyl 5-phosphate + NADPH + H(+). It functions in the pathway amino-acid biosynthesis; L-proline biosynthesis; L-glutamate 5-semialdehyde from L-glutamate: step 2/2. Catalyzes the NADPH-dependent reduction of L-glutamate 5-phosphate into L-glutamate 5-semialdehyde and phosphate. The product spontaneously undergoes cyclization to form 1-pyrroline-5-carboxylate. The chain is Gamma-glutamyl phosphate reductase from Leuconostoc citreum (strain KM20).